Here is a 191-residue protein sequence, read N- to C-terminus: Guanylate kinase (191 aa).

Residues 8–188 (GRLVVLAGPS…AVSDIKEILV (181 aa)) enclose the Guanylate kinase-like domain. Residue 15 to 22 (GPSAVGKS) participates in ATP binding.

This sequence belongs to the guanylate kinase family.

The protein resides in the cytoplasm. The catalysed reaction is GMP + ATP = GDP + ADP. Its function is as follows. Essential for recycling GMP and indirectly, cGMP. This chain is Guanylate kinase, found in Corynebacterium diphtheriae (strain ATCC 700971 / NCTC 13129 / Biotype gravis).